We begin with the raw amino-acid sequence, 283 residues long: Zinc finger protein 691 (283 aa).

Over residues 1 to 41 the composition is skewed to basic and acidic residues; it reads MGSEKEQRPEAHLPEEGEGAKPWRVDGSKDSQITPREDHGQ. The segment at 1–68 is disordered; the sequence is MGSEKEQRPE…KVTAQAGGPG (68 aa). The residue at position 43 (Ser-43) is a Phosphoserine. Residue Lys-81 forms a Glycyl lysine isopeptide (Lys-Gly) (interchain with G-Cter in SUMO2) linkage. 7 consecutive C2H2-type zinc fingers follow at residues 83–105, 111–133, 139–161, 167–189, 195–217, 223–245, and 251–273; these read FICA…QRIH, YKCS…ERIH, YQCA…QQDH, YRCD…HRTH, YICC…HRTH, YECT…QRTH, and YRCT…QKTH.

It belongs to the krueppel C2H2-type zinc-finger protein family.

The protein resides in the nucleus. Its function is as follows. May be involved in transcriptional regulation. The chain is Zinc finger protein 691 (Znf691) from Mus musculus (Mouse).